Reading from the N-terminus, the 345-residue chain is Anthranilate phosphoribosyltransferase (345 aa).

5-phospho-alpha-D-ribose 1-diphosphate-binding positions include 77-79 (TAG), 82-83 (GD), Thr-87, 89-92 (NVST), 106-114 (KHGNRAVSG), and Ser-118. Gly-79 contributes to the anthranilate binding site. Mg(2+) is bound at residue Ser-91. Position 109 (Asn-109) interacts with anthranilate. Arg-164 is an anthranilate binding site. Residues Asp-223 and Glu-224 each coordinate Mg(2+).

The protein belongs to the anthranilate phosphoribosyltransferase family. In terms of assembly, homodimer. The cofactor is Mg(2+).

The catalysed reaction is N-(5-phospho-beta-D-ribosyl)anthranilate + diphosphate = 5-phospho-alpha-D-ribose 1-diphosphate + anthranilate. The protein operates within amino-acid biosynthesis; L-tryptophan biosynthesis; L-tryptophan from chorismate: step 2/5. In terms of biological role, catalyzes the transfer of the phosphoribosyl group of 5-phosphorylribose-1-pyrophosphate (PRPP) to anthranilate to yield N-(5'-phosphoribosyl)-anthranilate (PRA). This chain is Anthranilate phosphoribosyltransferase, found in Saccharolobus solfataricus (strain ATCC 35092 / DSM 1617 / JCM 11322 / P2) (Sulfolobus solfataricus).